A 489-amino-acid polypeptide reads, in one-letter code: Lysine--tRNA ligase (489 aa).

Mg(2+) contacts are provided by Glu399 and Glu406.

The protein belongs to the class-II aminoacyl-tRNA synthetase family. In terms of assembly, homodimer. It depends on Mg(2+) as a cofactor.

It is found in the cytoplasm. The enzyme catalyses tRNA(Lys) + L-lysine + ATP = L-lysyl-tRNA(Lys) + AMP + diphosphate. This is Lysine--tRNA ligase from Roseiflexus castenholzii (strain DSM 13941 / HLO8).